The following is a 400-amino-acid chain: GTPase-binding protein rid1 (400 aa).

A compositionally biased stretch (polar residues) spans 16 to 27; the sequence is LSSDGLSESVNS. The disordered stretch occupies residues 16-47; it reads LSSDGLSESVNSSDREDSLSFQTPSTPSEDEM. A GBD/FH3 domain is found at 39-400; the sequence is PSTPSEDEMP…PYKLVQTGST (362 aa).

Its subcellular location is the cytoplasm. The polypeptide is GTPase-binding protein rid1 (rid1) (Schizosaccharomyces pombe (strain 972 / ATCC 24843) (Fission yeast)).